We begin with the raw amino-acid sequence, 199 residues long: Large ribosomal subunit protein eL13A (199 aa).

Threonine 144 and threonine 152 each carry phosphothreonine.

Belongs to the eukaryotic ribosomal protein eL13 family. In terms of assembly, component of the large ribosomal subunit (LSU). Mature yeast ribosomes consist of a small (40S) and a large (60S) subunit. The 40S small subunit contains 1 molecule of ribosomal RNA (18S rRNA) and 33 different proteins (encoded by 57 genes). The large 60S subunit contains 3 rRNA molecules (25S, 5.8S and 5S rRNA) and 46 different proteins (encoded by 81 genes).

The protein resides in the cytoplasm. Functionally, component of the ribosome, a large ribonucleoprotein complex responsible for the synthesis of proteins in the cell. The small ribosomal subunit (SSU) binds messenger RNAs (mRNAs) and translates the encoded message by selecting cognate aminoacyl-transfer RNA (tRNA) molecules. The large subunit (LSU) contains the ribosomal catalytic site termed the peptidyl transferase center (PTC), which catalyzes the formation of peptide bonds, thereby polymerizing the amino acids delivered by tRNAs into a polypeptide chain. The nascent polypeptides leave the ribosome through a tunnel in the LSU and interact with protein factors that function in enzymatic processing, targeting, and the membrane insertion of nascent chains at the exit of the ribosomal tunnel. The polypeptide is Large ribosomal subunit protein eL13A (Saccharomyces cerevisiae (strain ATCC 204508 / S288c) (Baker's yeast)).